Here is a 970-residue protein sequence, read N- to C-terminus: Transposase for insertion sequence element IS1071 in transposon Tn5271 (970 aa).

Belongs to the transposase 7 family.

Its function is as follows. Required for transposition of transposon Tn5271. The sequence is that of Transposase for insertion sequence element IS1071 in transposon Tn5271 from Comamonas testosteroni (Pseudomonas testosteroni).